The following is a 320-amino-acid chain: Nodulation efficiency protein NfeD (320 aa).

It belongs to the ornithine cyclodeaminase/mu-crystallin family.

Its function is as follows. Seems to be involved in the nodulation efficiency of R.meliloti GR4 on alfalfa roots. The sequence is that of Nodulation efficiency protein NfeD from Rhizobium meliloti (Ensifer meliloti).